The primary structure comprises 103 residues: NADH-quinone oxidoreductase subunit K 2 (103 aa).

The next 3 membrane-spanning stretches (helical) occupy residues leucine 7–isoleucine 27, isoleucine 31–alanine 51, and isoleucine 63–isoleucine 83.

It belongs to the complex I subunit 4L family. NDH-1 is composed of 14 different subunits. Subunits NuoA, H, J, K, L, M, N constitute the membrane sector of the complex.

The protein resides in the cell inner membrane. The enzyme catalyses a quinone + NADH + 5 H(+)(in) = a quinol + NAD(+) + 4 H(+)(out). NDH-1 shuttles electrons from NADH, via FMN and iron-sulfur (Fe-S) centers, to quinones in the respiratory chain. The immediate electron acceptor for the enzyme in this species is believed to be ubiquinone. Couples the redox reaction to proton translocation (for every two electrons transferred, four hydrogen ions are translocated across the cytoplasmic membrane), and thus conserves the redox energy in a proton gradient. The sequence is that of NADH-quinone oxidoreductase subunit K 2 from Koribacter versatilis (strain Ellin345).